We begin with the raw amino-acid sequence, 127 residues long: Holo-[acyl-carrier-protein] synthase (127 aa).

Positions 9 and 58 each coordinate Mg(2+).

This sequence belongs to the P-Pant transferase superfamily. AcpS family. The cofactor is Mg(2+).

Its subcellular location is the cytoplasm. It carries out the reaction apo-[ACP] + CoA = holo-[ACP] + adenosine 3',5'-bisphosphate + H(+). In terms of biological role, transfers the 4'-phosphopantetheine moiety from coenzyme A to a Ser of acyl-carrier-protein. The protein is Holo-[acyl-carrier-protein] synthase of Shewanella oneidensis (strain ATCC 700550 / JCM 31522 / CIP 106686 / LMG 19005 / NCIMB 14063 / MR-1).